The following is a 250-amino-acid chain: UDP-2,3-diacylglucosamine hydrolase (250 aa).

The Mn(2+) site is built by Asp8, His10, Asp41, Asn79, and His114. 79-80 (NR) contributes to the substrate binding site. Positions 122, 160, 172, 175, and 203 each coordinate substrate. Positions 203 and 205 each coordinate Mn(2+).

This sequence belongs to the LpxH family. Mn(2+) serves as cofactor.

Its subcellular location is the cell inner membrane. It carries out the reaction UDP-2-N,3-O-bis[(3R)-3-hydroxytetradecanoyl]-alpha-D-glucosamine + H2O = 2-N,3-O-bis[(3R)-3-hydroxytetradecanoyl]-alpha-D-glucosaminyl 1-phosphate + UMP + 2 H(+). The protein operates within glycolipid biosynthesis; lipid IV(A) biosynthesis; lipid IV(A) from (3R)-3-hydroxytetradecanoyl-[acyl-carrier-protein] and UDP-N-acetyl-alpha-D-glucosamine: step 4/6. Its function is as follows. Hydrolyzes the pyrophosphate bond of UDP-2,3-diacylglucosamine to yield 2,3-diacylglucosamine 1-phosphate (lipid X) and UMP by catalyzing the attack of water at the alpha-P atom. Involved in the biosynthesis of lipid A, a phosphorylated glycolipid that anchors the lipopolysaccharide to the outer membrane of the cell. The sequence is that of UDP-2,3-diacylglucosamine hydrolase from Xylella fastidiosa (strain M23).